Consider the following 61-residue polypeptide: MWKLICIQLTTTTGLSESISTSELTITMNHKDCNPVFREEYFSVLNKVATSGFFTGERCAL.

Functionally, the protein is truncated in this strain and presumably inactive. It has similarities with variola virus CrmB, but the product is inactivated due to several premature stop codon. The chain is Truncated Cytokine response-modifying protein B from Bos taurus (Bovine).